Here is a 1043-residue protein sequence, read N- to C-terminus: Ras guanine nucleotide exchange factor S (1043 aa).

Residues Ile109 to Leu142 adopt a coiled-coil conformation. 4 stretches are compositionally biased toward low complexity: residues Gln135 to Ile145, Leu245 to Ser258, Ser266 to Ser281, and Asn293 to Ser307. Disordered regions lie at residues Gln135–Ile160 and Leu245–Gln316. Residues Leu404 to Glu434 adopt a coiled-coil conformation. The region spanning Lys645–Ile768 is the N-terminal Ras-GEF domain. The 241-residue stretch at Ser803–Lys1043 folds into the Ras-GEF domain.

Its function is as follows. Promotes the exchange of Ras-bound GDP by GTP. This is Ras guanine nucleotide exchange factor S (gefS) from Dictyostelium discoideum (Social amoeba).